The chain runs to 463 residues: Probable Xaa-Pro aminopeptidase pepP (463 aa).

Mn(2+)-binding residues include Asp259, Asp270, Glu393, and Glu433.

This sequence belongs to the peptidase M24B family. The cofactor is Mn(2+).

The catalysed reaction is Release of any N-terminal amino acid, including proline, that is linked to proline, even from a dipeptide or tripeptide.. Functionally, catalyzes the removal of a penultimate prolyl residue from the N-termini of peptides. The chain is Probable Xaa-Pro aminopeptidase pepP (pepP) from Pyrenophora teres f. teres (strain 0-1) (Barley net blotch fungus).